The chain runs to 256 residues: Thiazole synthase (256 aa).

Lys-95 (schiff-base intermediate with DXP) is an active-site residue. Residues Gly-156, 182–183 (AG), and 204–205 (NT) each bind 1-deoxy-D-xylulose 5-phosphate.

It belongs to the ThiG family. Homotetramer. Forms heterodimers with either ThiH or ThiS.

It localises to the cytoplasm. The enzyme catalyses [ThiS sulfur-carrier protein]-C-terminal-Gly-aminoethanethioate + 2-iminoacetate + 1-deoxy-D-xylulose 5-phosphate = [ThiS sulfur-carrier protein]-C-terminal Gly-Gly + 2-[(2R,5Z)-2-carboxy-4-methylthiazol-5(2H)-ylidene]ethyl phosphate + 2 H2O + H(+). Its pathway is cofactor biosynthesis; thiamine diphosphate biosynthesis. Its function is as follows. Catalyzes the rearrangement of 1-deoxy-D-xylulose 5-phosphate (DXP) to produce the thiazole phosphate moiety of thiamine. Sulfur is provided by the thiocarboxylate moiety of the carrier protein ThiS. In vitro, sulfur can be provided by H(2)S. This Escherichia coli O8 (strain IAI1) protein is Thiazole synthase.